Reading from the N-terminus, the 168-residue chain is Photosystem I assembly protein Ycf3 (168 aa).

3 TPR repeats span residues 35-68 (AFTYYRDGMSAQSEGNYAEALQNYYEATRLEIDP), 72-105 (SYILYNIGLIHTSNGEHTKALEYYFRALERNPFL), and 120-153 (GEQAIQQGDSEIAESWFDQAAEYWKQAIALTPGN).

This sequence belongs to the Ycf3 family.

The protein localises to the plastid. The protein resides in the chloroplast thylakoid membrane. Functionally, essential for the assembly of the photosystem I (PSI) complex. May act as a chaperone-like factor to guide the assembly of the PSI subunits. In Nandina domestica (Heavenly bamboo), this protein is Photosystem I assembly protein Ycf3.